The chain runs to 301 residues: MNILLFGKTGQVGWELQRALAPLGNLIALDVHSTDYCGDFSNPEGVAETVKKIRPDVIVNAAAHTDVDKAESEPEFAQLLNATSVEAIAKAANEVGAWVIHYSTDYVFPGTGEIPWQGGTDATAPLNVYGETKLSSEKKALQKHCGKHIIFRTSWVYAGKGNNFAKTMLRLAKEREELAVINDQFGRPTGAELLADCTAHAIRVAVDKPEVAGLYHLVAGGTTTWHDYAALVFEEARKAGINLALNKLNAVPTTAYPTPARRPHNSRLNTEKFQQNFALVLPDWQVGVKRMLNELFTTTAI.

NADH contacts are provided by residues 10–12 (GQV), Asp-30, 39–40 (DF), and 63–65 (AHT). 11 to 12 (QV) lines the NADPH pocket. Residues 39–40 (DF), 63–65 (AHT), and Tyr-102 contribute to the NADPH site. A dTDP-beta-L-rhamnose-binding site is contributed by 104–105 (TD). The NADH site is built by Tyr-129 and Lys-133. NADPH-binding residues include Tyr-129 and Lys-133. Catalysis depends on Tyr-129, which acts as the Proton donor/acceptor. Trp-155 contributes to the dTDP-beta-L-rhamnose binding site.

It belongs to the dTDP-4-dehydrorhamnose reductase family. Homodimer. Mg(2+) serves as cofactor.

The catalysed reaction is dTDP-beta-L-rhamnose + NADP(+) = dTDP-4-dehydro-beta-L-rhamnose + NADPH + H(+). It functions in the pathway carbohydrate biosynthesis; dTDP-L-rhamnose biosynthesis. The protein operates within bacterial outer membrane biogenesis; LPS O-antigen biosynthesis. In terms of biological role, involved in the biosynthesis of the dTDP-L-rhamnose which is an important component of lipopolysaccharide (LPS). Catalyzes the reduction of dTDP-6-deoxy-L-lyxo-4-hexulose to yield dTDP-L-rhamnose. RmlD uses NADH and NADPH nearly equally well. This is dTDP-4-dehydrorhamnose reductase from Escherichia coli.